The sequence spans 226 residues: ATP-dependent dethiobiotin synthetase BioD (226 aa).

ATP is bound at residue 12-17; the sequence is GVGKTV. Residue threonine 16 participates in Mg(2+) binding. Lysine 37 is a catalytic residue. Threonine 41 contributes to the substrate binding site. ATP contacts are provided by residues aspartate 49, 108–111, 169–170, and 197–199; these read EGAG, GS, and PAG. Positions 49 and 108 each coordinate Mg(2+).

It belongs to the dethiobiotin synthetase family. Homodimer. Mg(2+) is required as a cofactor.

The protein localises to the cytoplasm. It catalyses the reaction (7R,8S)-7,8-diammoniononanoate + CO2 + ATP = (4R,5S)-dethiobiotin + ADP + phosphate + 3 H(+). The protein operates within cofactor biosynthesis; biotin biosynthesis; biotin from 7,8-diaminononanoate: step 1/2. Catalyzes a mechanistically unusual reaction, the ATP-dependent insertion of CO2 between the N7 and N8 nitrogen atoms of 7,8-diaminopelargonic acid (DAPA, also called 7,8-diammoniononanoate) to form a ureido ring. The sequence is that of ATP-dependent dethiobiotin synthetase BioD from Mycobacterium bovis (strain ATCC BAA-935 / AF2122/97).